The primary structure comprises 430 residues: Serine--tRNA ligase (430 aa).

Residues 45-58 (ENLQAERNSRSKSI) show a composition bias toward polar residues. Residues 45–65 (ENLQAERNSRSKSIGQAKARG) form a disordered region. L-serine is bound at residue 237 to 239 (TSE). Position 268-270 (268-270 (RSE)) interacts with ATP. E291 serves as a coordination point for L-serine. 355–358 (EISS) is a binding site for ATP. Residue S391 participates in L-serine binding.

This sequence belongs to the class-II aminoacyl-tRNA synthetase family. Type-1 seryl-tRNA synthetase subfamily. Homodimer. The tRNA molecule binds across the dimer.

The protein localises to the cytoplasm. The catalysed reaction is tRNA(Ser) + L-serine + ATP = L-seryl-tRNA(Ser) + AMP + diphosphate + H(+). It catalyses the reaction tRNA(Sec) + L-serine + ATP = L-seryl-tRNA(Sec) + AMP + diphosphate + H(+). It participates in aminoacyl-tRNA biosynthesis; selenocysteinyl-tRNA(Sec) biosynthesis; L-seryl-tRNA(Sec) from L-serine and tRNA(Sec): step 1/1. Its function is as follows. Catalyzes the attachment of serine to tRNA(Ser). Is also able to aminoacylate tRNA(Sec) with serine, to form the misacylated tRNA L-seryl-tRNA(Sec), which will be further converted into selenocysteinyl-tRNA(Sec). The protein is Serine--tRNA ligase of Erwinia tasmaniensis (strain DSM 17950 / CFBP 7177 / CIP 109463 / NCPPB 4357 / Et1/99).